The sequence spans 176 residues: Inner membrane-spanning protein YciB (176 aa).

The next 6 membrane-spanning stretches (helical) occupy residues 3 to 23, 24 to 44, 49 to 69, 81 to 101, 119 to 139, and 149 to 169; these read FLFD…WGIF, TATA…AFRH, TMLW…LVLH, LYWL…NNLI, LNVA…YVVH, and FKLF…SLWL.

The protein belongs to the YciB family.

It is found in the cell inner membrane. In terms of biological role, plays a role in cell envelope biogenesis, maintenance of cell envelope integrity and membrane homeostasis. In Burkholderia ambifaria (strain MC40-6), this protein is Inner membrane-spanning protein YciB.